We begin with the raw amino-acid sequence, 211 residues long: Proteasome subunit beta (211 aa).

The propeptide at 1 to 9 (MDNDKYLKG) is removed in mature form; by autocatalysis. The active-site Nucleophile is the Thr-10.

Belongs to the peptidase T1B family. In terms of assembly, the 20S proteasome core is composed of 14 alpha and 14 beta subunits that assemble into four stacked heptameric rings, resulting in a barrel-shaped structure. The two inner rings, each composed of seven catalytic beta subunits, are sandwiched by two outer rings, each composed of seven alpha subunits. The catalytic chamber with the active sites is on the inside of the barrel. Has a gated structure, the ends of the cylinder being occluded by the N-termini of the alpha-subunits. Is capped at one or both ends by the proteasome regulatory ATPase, PAN.

The protein resides in the cytoplasm. It carries out the reaction Cleavage of peptide bonds with very broad specificity.. Its activity is regulated as follows. The formation of the proteasomal ATPase PAN-20S proteasome complex, via the docking of the C-termini of PAN into the intersubunit pockets in the alpha-rings, triggers opening of the gate for substrate entry. Interconversion between the open-gate and close-gate conformations leads to a dynamic regulation of the 20S proteasome proteolysis activity. Functionally, component of the proteasome core, a large protease complex with broad specificity involved in protein degradation. This Methanosarcina barkeri (strain Fusaro / DSM 804) protein is Proteasome subunit beta.